Reading from the N-terminus, the 359-residue chain is DNA replication and repair protein RecF (359 aa).

30–37 (GNNGSGKT) is an ATP binding site.

Belongs to the RecF family.

Its subcellular location is the cytoplasm. Its function is as follows. The RecF protein is involved in DNA metabolism; it is required for DNA replication and normal SOS inducibility. RecF binds preferentially to single-stranded, linear DNA. It also seems to bind ATP. The chain is DNA replication and repair protein RecF from Haemophilus influenzae (strain 86-028NP).